The following is a 272-amino-acid chain: Aquaporin-1 (272 aa).

The Cytoplasmic segment spans residues 1-11 (MASEFKKKLFW). A helical membrane pass occupies residues 12–29 (RAVVAEFLAMILFIFISI). At 30 to 48 (GSALGFHYPIKSNQTTGAV) the chain is on the extracellular side. An N-linked (GlcNAc...) asparagine glycan is attached at N42. A helical membrane pass occupies residues 49-67 (QDNVKVSLAFGLSIATLAQ). Residues 68–70 (SVG) are Cytoplasmic-facing. An intramembrane segment occupies 71-84 (HISGAHLNPAVTLG). The NPA 1 motif lies at 78-80 (NPA). Topologically, residues 85–92 (LLLSCQIS) are cytoplasmic. The chain crosses the membrane as a helical span at residues 93–111 (ILRAIMYIIAQCVGAIVAT). The Extracellular segment spans residues 112 to 135 (VILSGITSSLPDNSLGLNALAPGV). The helical transmembrane segment at 136 to 155 (NSGQGLGIEIIGTLQLVLCV) threads the bilayer. At 156–166 (LATTDRRRRRD) the chain is on the cytoplasmic side. A helical transmembrane segment spans residues 167–184 (LGDSGPLAIGFSVALGHL). Residues 185-189 (LAIDY) lie on the Extracellular side of the membrane. Residues 190–202 (TGCGINPARSFGS) lie within the membrane without spanning it. Residues 195 to 197 (NPA) carry the NPA 2 motif. Residues 203 to 209 (SVITHNF) lie on the Extracellular side of the membrane. Residues 210 to 227 (QDHWIFWVGPFIGAALAV) form a helical membrane-spanning segment. Over 228–272 (LIYDFILAPRSSDLTDRVKVWTSGQVEEYDLDADDINSRVEMKPK) the chain is Cytoplasmic. S250 bears the Phosphoserine mark. Y256 is subject to Phosphotyrosine. Residue S265 is modified to Phosphoserine.

Belongs to the MIP/aquaporin (TC 1.A.8) family. As to quaternary structure, homotetramer; each monomer provides an independent water pore. Component of the ankyrin-1 complex in the erythrocyte, composed of ANK1, RHCE, RHAG, SLC4A1, EPB42, GYPA, GYPB and AQP1. Interacts with EPHB2; involved in endolymph production in the inner ear. Identified in a complex with STOM. Interacts (via the N-terminal) with ANK1 (via ANK 1-5 repeats). Interacts (via the C-terminal) with EPB42. As to expression, detected in fetal kidney (at protein level). Detected in fetal kidney.

The protein resides in the cell membrane. It carries out the reaction H2O(in) = H2O(out). The enzyme catalyses nitric oxide(out) = nitric oxide(in). The catalysed reaction is CO2(out) = CO2(in). It catalyses the reaction glycerol(in) = glycerol(out). It carries out the reaction H2O2(out) = H2O2(in). The enzyme catalyses K(+)(in) = K(+)(out). The catalysed reaction is Na(+)(in) = Na(+)(out). Functionally, forms a water channel that facilitates the transport of water across cell membranes, playing a crucial role in water homeostasis in various tissues. Could also be permeable to small solutes including hydrogen peroxide, glycerol and gases such as amonnia (NH3), nitric oxide (NO) and carbon dioxide (CO2). Recruited to the ankyrin-1 complex, a multiprotein complex of the erythrocyte membrane, it could be part of a CO2 metabolon, linking facilitated diffusion of CO2 across the membrane, anion exchange of Cl(-)/HCO3(-) and interconversion of dissolved CO2 and carbonic acid in the cytosol. In vitro, it shows non-selective gated cation channel activity and may be permeable to cations like K(+) and Na(+) in vivo. The chain is Aquaporin-1 from Ovis aries (Sheep).